The chain runs to 1104 residues: Protein KIBRA (1104 aa).

WW domains follow at residues leucine 6–aspartate 39 and aspartate 53–valine 86. A coiled-coil region spans residues leucine 107–glutamine 193. Position 141 is a phosphoserine (serine 141). 2 disordered regions span residues serine 429–leucine 449 and threonine 509–cysteine 547. The segment covering threonine 527–serine 542 has biased composition (low complexity). A Phosphoserine modification is found at serine 535. A Phosphoserine; by CDK1 modification is found at serine 542. The C2 domain maps to glycine 659–tyrosine 782. A disordered region spans residues leucine 822 to proline 949. The interval glutamate 836–valine 1104 is interaction with histone H3. Residues tyrosine 841–valine 862 are compositionally biased toward acidic residues. Residues serine 887, serine 891, and serine 919 each carry the phosphoserine modification. Over residues isoleucine 916–tyrosine 930 the composition is skewed to polar residues. The residue at position 921 (threonine 921) is a Phosphothreonine. Serine 923 carries the phosphoserine; by CDK1 modification. A Phosphoserine modification is found at serine 939. 2 interaction with PRKCZ regions span residues serine 945–glutamine 988 and proline 948–serine 967. Serine 967 and serine 970 each carry phosphoserine; by PKC/PRKCZ. Positions histidine 994–glutamine 1024 form a coiled coil. An ADDV motif motif is present at residues aspartate 1102 to valine 1104.

The protein belongs to the WWC family. KIBRA subfamily. Homodimer. Forms heterodimers with WWC2 and WWC3. Interacts with DDN. Interacts with DYNLL1 and histone H3. The interaction with DYNLL1 is mandatory for the recruitment and transactivation functions of ESR1 or DYNLL1 to the target chromatin and the interaction with histone H3 ensures proper regulatory interaction of WWC1-DYNLL1-ESR1 complexes with target chromatin. Interacts (via WW domains) with DDR1 (via PPxY motif) in a collagen-regulated manner. Interacts with PRKCZ (via the protein kinase domain). Forms a tripartite complex with DDR1 and PRKCZ, but predominantly in the absence of collagen. Interacts (via the ADDV motif) with PATJ (via PDZ domain 8). Interacts (via WW domains) with SYNPO (via PPxY motifs). Interacts with NF2 and SNX4. Interacts with CCDC141; retains AMPAR in the cytosol after internalization. Interacts with DLC1 and PRKCZ. Interacts (via WW domains) with LATS1 and LATS2. Phosphorylation at Ser-542 and Ser-923 by CDK1 in response to spindle damage stress regulates mitotic exit, these two sites are dephosphorylated by CDC14B. In terms of tissue distribution, mammary epithelium.

Its subcellular location is the cytoplasm. It localises to the perinuclear region. The protein resides in the nucleus. It is found in the cell projection. The protein localises to the ruffle membrane. Its subcellular location is the cytosol. Functionally, regulator of the Hippo signaling pathway, also known as the Salvador-Warts-Hippo (SWH) pathway. Enhances phosphorylation of LATS1 and YAP1 and negatively regulates cell proliferation and organ growth due to a suppression of the transcriptional activity of YAP1, the major effector of the Hippo pathway. Along with NF2 can synergistically induce the phosphorylation of LATS1 and LATS2 and function in the regulation of Hippo signaling pathway. Acts as a transcriptional coactivator of ESR1 which plays an essential role in DYNLL1-mediated ESR1 transactivation. Modulates directional migration of podocytes. May be associated with memory performance. Regulates collagen-stimulated activation of the ERK/MAPK cascade. Plays an important role in regulating AMPA-selective glutamate receptors (AMPARs) trafficking. The chain is Protein KIBRA (Wwc1) from Mus musculus (Mouse).